A 205-amino-acid chain; its full sequence is GTP-binding protein rho3 (205 aa).

20–27 (GDGAAGKT) contacts GTP. Residues 42–50 (YEPTIFENY) carry the Effector region motif. GTP is bound by residues 67 to 71 (DTAGQ) and 125 to 128 (LKCD). Position 202 is a cysteine methyl ester (cysteine 202). Cysteine 202 is lipidated: S-geranylgeranyl cysteine. The propeptide at 203-205 (IIA) is removed in mature form.

It belongs to the small GTPase superfamily. Rho family. In terms of assembly, interacts with for3. Palmitoylated by the erf2-erf4 complex.

It is found in the cell membrane. In terms of biological role, involved in controlling cell shape and septation. Regulates cell separation by modulating the function of the exocyst complex. Involved in post-Golgi vesicle transport. Involved in driving sexual development in a palmitoylation-dependent manner. The sequence is that of GTP-binding protein rho3 (rho3) from Schizosaccharomyces pombe (strain 972 / ATCC 24843) (Fission yeast).